A 180-amino-acid polypeptide reads, in one-letter code: Sperm protein associated with the nucleus on the X chromosome N2 (180 aa).

Disordered regions lie at residues 1-46 (MEQP…KTKT) and 64-180 (NSNQ…GGED). The span at 10 to 26 (GEKRKSPCESNNKKNDE) shows a compositional bias: basic and acidic residues. Over residues 82-169 (QEEEDEGLDS…SSQEDEDLDS (88 aa)) the composition is skewed to acidic residues. Low complexity predominate over residues 170 to 180 (SEGSSQEGGED).

This sequence belongs to the SPAN-X family.

This chain is Sperm protein associated with the nucleus on the X chromosome N2 (SPANXN2), found in Homo sapiens (Human).